Reading from the N-terminus, the 177-residue chain is ATP synthase subunit delta (177 aa).

The protein belongs to the ATPase delta chain family. As to quaternary structure, F-type ATPases have 2 components, F(1) - the catalytic core - and F(0) - the membrane proton channel. F(1) has five subunits: alpha(3), beta(3), gamma(1), delta(1), epsilon(1). F(0) has three main subunits: a(1), b(2) and c(10-14). The alpha and beta chains form an alternating ring which encloses part of the gamma chain. F(1) is attached to F(0) by a central stalk formed by the gamma and epsilon chains, while a peripheral stalk is formed by the delta and b chains.

The protein resides in the cell inner membrane. Its function is as follows. F(1)F(0) ATP synthase produces ATP from ADP in the presence of a proton or sodium gradient. F-type ATPases consist of two structural domains, F(1) containing the extramembraneous catalytic core and F(0) containing the membrane proton channel, linked together by a central stalk and a peripheral stalk. During catalysis, ATP synthesis in the catalytic domain of F(1) is coupled via a rotary mechanism of the central stalk subunits to proton translocation. Functionally, this protein is part of the stalk that links CF(0) to CF(1). It either transmits conformational changes from CF(0) to CF(1) or is implicated in proton conduction. The polypeptide is ATP synthase subunit delta (Shewanella putrefaciens (strain CN-32 / ATCC BAA-453)).